Consider the following 341-residue polypeptide: 33 kDa chaperonin (341 aa).

2 disulfide bridges follow: Cys-245-Cys-247 and Cys-278-Cys-281.

This sequence belongs to the HSP33 family. Under oxidizing conditions two disulfide bonds are formed involving the reactive cysteines. Under reducing conditions zinc is bound to the reactive cysteines and the protein is inactive.

It is found in the cytoplasm. Its function is as follows. Redox regulated molecular chaperone. Protects both thermally unfolding and oxidatively damaged proteins from irreversible aggregation. Plays an important role in the bacterial defense system toward oxidative stress. The sequence is that of 33 kDa chaperonin from Thermus thermophilus (strain ATCC BAA-163 / DSM 7039 / HB27).